A 431-amino-acid polypeptide reads, in one-letter code: Serine hydroxymethyltransferase (431 aa).

(6S)-5,6,7,8-tetrahydrofolate contacts are provided by residues Leu-128 and Gly-132–Leu-134. At Lys-237 the chain carries N6-(pyridoxal phosphate)lysine. Residue Glu-253 coordinates (6S)-5,6,7,8-tetrahydrofolate.

Belongs to the SHMT family. As to quaternary structure, homodimer. The cofactor is pyridoxal 5'-phosphate.

It is found in the cytoplasm. The catalysed reaction is (6R)-5,10-methylene-5,6,7,8-tetrahydrofolate + glycine + H2O = (6S)-5,6,7,8-tetrahydrofolate + L-serine. It functions in the pathway one-carbon metabolism; tetrahydrofolate interconversion. The protein operates within amino-acid biosynthesis; glycine biosynthesis; glycine from L-serine: step 1/1. Catalyzes the reversible interconversion of serine and glycine with tetrahydrofolate (THF) serving as the one-carbon carrier. This reaction serves as the major source of one-carbon groups required for the biosynthesis of purines, thymidylate, methionine, and other important biomolecules. Also exhibits THF-independent aldolase activity toward beta-hydroxyamino acids, producing glycine and aldehydes, via a retro-aldol mechanism. This Cereibacter sphaeroides (strain ATCC 17023 / DSM 158 / JCM 6121 / CCUG 31486 / LMG 2827 / NBRC 12203 / NCIMB 8253 / ATH 2.4.1.) (Rhodobacter sphaeroides) protein is Serine hydroxymethyltransferase.